The chain runs to 130 residues: Small ribosomal subunit protein uS4 (130 aa).

K64 is subject to N6-acetyllysine. K91 is covalently cross-linked (Glycyl lysine isopeptide (Lys-Gly) (interchain with G-Cter in SUMO2)). Residues 106-130 (RRLQTQVFKLGLAXSIHHXRVLIRQ) enclose the S4 RNA-binding domain. An N6-acetyllysine modification is found at K114.

Belongs to the universal ribosomal protein uS4 family. As to quaternary structure, component of the small ribosomal subunit. Identified in a IGF2BP1-dependent mRNP granule complex containing untranslated mRNAs. Part of the small subunit (SSU) processome, composed of more than 70 proteins and the RNA chaperone small nucleolar RNA (snoRNA) U3.

It is found in the cytoplasm. The protein localises to the nucleus. Its subcellular location is the nucleolus. Component of the small ribosomal subunit. The ribosome is a large ribonucleoprotein complex responsible for the synthesis of proteins in the cell. Part of the small subunit (SSU) processome, first precursor of the small eukaryotic ribosomal subunit. During the assembly of the SSU processome in the nucleolus, many ribosome biogenesis factors, an RNA chaperone and ribosomal proteins associate with the nascent pre-rRNA and work in concert to generate RNA folding, modifications, rearrangements and cleavage as well as targeted degradation of pre-ribosomal RNA by the RNA exosome. In Sus scrofa (Pig), this protein is Small ribosomal subunit protein uS4 (RPS9).